A 239-amino-acid chain; its full sequence is Serine protease SplF (239 aa).

Residues 1-36 form the signal peptide; sequence MNKNIIIKSIAALTILTSITGVGTTVVDGIQQTAKA. Catalysis depends on charge relay system residues His-75, Asp-114, and Ser-192.

The protein belongs to the peptidase S1B family.

Its subcellular location is the secreted. This is Serine protease SplF (splF) from Staphylococcus aureus (strain JH9).